A 163-amino-acid polypeptide reads, in one-letter code: Cytochrome c-type biogenesis protein CcmE (163 aa).

The Cytoplasmic segment spans residues 1-8 (MNPRRKKR). Residues 9–29 (LTIILAISAGLAAVIGLVLYA) traverse the membrane as a helical; Signal-anchor for type II membrane protein segment. Over 30–163 (LSQNIDLFYT…TEAQLKGAKQ (134 aa)) the chain is Periplasmic. Heme contacts are provided by H131 and Y135.

The protein belongs to the CcmE/CycJ family.

It localises to the cell inner membrane. Heme chaperone required for the biogenesis of c-type cytochromes. Transiently binds heme delivered by CcmC and transfers the heme to apo-cytochromes in a process facilitated by CcmF and CcmH. In Aeromonas salmonicida (strain A449), this protein is Cytochrome c-type biogenesis protein CcmE.